A 270-amino-acid chain; its full sequence is MTILFVTMVISYFSCMRAAPMREIPGVQGGHRAEGYLGAAAAAAAAITSGSRGHGTPQSGGGLPWLTDTFEQVIEELLEVEGEATQQLGPGADQGQGGGGPAAMADSKDVDMYASRVMISNQVPLEPPLLFLLEEYKNYLDAANMSMRVRRHSDPARRGELSVCDSISQWVTALDKKTAIDMSGQTVTVLEKVPVTNGQLKQYFYETKCNPLGYTKEGCRGIDKRHYNSQCRTTQSYVRALTMDSKRKIGWRFIRIDTSCVCTLTIKRGR.

The N-terminal stretch at 1–18 is a signal peptide; sequence MTILFVTMVISYFSCMRA. The propeptide occupies 19-151; that stretch reads APMREIPGVQ…AANMSMRVRR (133 aa). Asn-144 carries an N-linked (GlcNAc...) asparagine glycan. Disulfide bonds link Cys-164/Cys-231, Cys-209/Cys-260, and Cys-219/Cys-262.

The protein belongs to the NGF-beta family.

The protein resides in the secreted. Functionally, promotes the survival of neuronal populations that are all located either in the central nervous system or directly connected to it. The polypeptide is Neurotrophic factor BDNF precursor form (bdnf) (Cyprinus carpio (Common carp)).